The chain runs to 548 residues: Lipase 2 (548 aa).

Residues 1–14 form the signal peptide; sequence MKLCLLALGAAVAA. A disulfide bridge connects residues C74 and C111. S223 serves as the catalytic Acyl-ester intermediate. A disulfide bridge links C282 with C291. Residue E355 is the Charge relay system of the active site. N-linked (GlcNAc...) asparagine glycosylation occurs at N365. Residue H463 is the Charge relay system of the active site.

Belongs to the type-B carboxylesterase/lipase family.

The enzyme catalyses a triacylglycerol + H2O = a diacylglycerol + a fatty acid + H(+). The polypeptide is Lipase 2 (LIP2) (Diutina rugosa (Yeast)).